A 317-amino-acid chain; its full sequence is L-lactate dehydrogenase 1 (317 aa).

Residues valine 17, aspartate 38, lysine 43, tyrosine 69, and 83–84 each bind NAD(+); that span reads GA. Substrate-binding residues include glutamine 86 and arginine 92. NAD(+) is bound by residues serine 105, 122 to 124, and serine 147; that span reads ATN. 124-127 is a substrate binding site; the sequence is NPVD. 152 to 155 contributes to the substrate binding site; the sequence is DSAR. Histidine 179 acts as the Proton acceptor in catalysis. Position 223 is a phosphotyrosine (tyrosine 223). Position 232 (threonine 232) interacts with substrate.

The protein belongs to the LDH/MDH superfamily. LDH family. In terms of assembly, homotetramer.

It localises to the cytoplasm. It catalyses the reaction (S)-lactate + NAD(+) = pyruvate + NADH + H(+). Its pathway is fermentation; pyruvate fermentation to lactate; (S)-lactate from pyruvate: step 1/1. Its function is as follows. Catalyzes the conversion of lactate to pyruvate (Potential). Appears to be the primary factor that allows S.aureus growth during nitrosative stress in both aerobically and anaerobically cultured cells. The chain is L-lactate dehydrogenase 1 from Staphylococcus aureus (strain MRSA252).